Here is a 278-residue protein sequence, read N- to C-terminus: HTH-type transcriptional activator RhaS (278 aa).

The 99-residue stretch at 174 to 272 (NQLMAWLEDH…NWSPRDIRQG (99 aa)) folds into the HTH araC/xylS-type domain. DNA-binding regions (H-T-H motif) lie at residues 191 to 212 (EAVA…KQHT) and 239 to 262 (VTEI…RREF).

As to quaternary structure, binds DNA as a dimer.

It is found in the cytoplasm. Functionally, activates expression of the rhaBAD and rhaT operons. The protein is HTH-type transcriptional activator RhaS of Salmonella heidelberg (strain SL476).